A 270-amino-acid polypeptide reads, in one-letter code: uncharacterized protein (270 aa).

At 1 to 37 the chain is on the cytoplasmic side; the sequence is MATHTSKRRIHRWENNELSEENSTIIYFPARGLMWTH. Residues 38–58 traverse the membrane as a helical segment; that stretch reads FPFVLGICLEFVGYVLKIVFI. Residues 59-65 are Extracellular-facing; sequence NSPSIST. Residues 66-86 traverse the membrane as a helical segment; that stretch reads FIAQSVLLLIAPSLYALSIFM. At 87-93 the chain is on the cytoplasmic side; it reads LFSKMAR. The chain crosses the membrane as a helical span at residues 94–114; the sequence is LILMEAYMLIPAKFSTVSFVV. Residues 115–140 are Extracellular-facing; that stretch reads ADMIGRVLQAVGGGLLSSWNSRNTGR. The helical transmembrane segment at 141-161 threads the bilayer; sequence ILIIVGLFIQIFCYTFLTFSQ. Residues 162–181 are Cytoplasmic-facing; it reads LFLHYKMKATPSKIVRDSNE. Residues 182 to 202 form a helical membrane-spanning segment; that stretch reads WFQYNFILLAGILLVNGRTIV. Over 203-220 the chain is Extracellular; sequence RVVQFLMGLQSYIGQHEW. Residues 221 to 241 form a helical membrane-spanning segment; the sequence is CLYVFDTVLMFLLPLIFLATF. Residues 242 to 270 lie on the Cytoplasmic side of the membrane; it reads RARNLFKLQDKSVNIQLNKLLDKESVSED.

It belongs to the lipid-translocating exporter (LTE) (TC 9.A.26.1) family.

It localises to the membrane. This is an uncharacterized protein from Saccharomyces cerevisiae (strain ATCC 204508 / S288c) (Baker's yeast).